A 513-amino-acid polypeptide reads, in one-letter code: Ectonucleoside triphosphate diphosphohydrolase 1 (513 aa).

Over 1–16 (MEDRRESELKVFCSKN) the chain is Cytoplasmic. The chain crosses the membrane as a helical span at residues 17-37 (ILSILGFSCIIAVIALLALGL). Residues 38 to 481 (TQNKALPENV…SPPLPHSTYV (444 aa)) lie on the Extracellular side of the membrane. N73 carries an N-linked (GlcNAc...) asparagine glycan. E174 functions as the Proton acceptor in the catalytic mechanism. N-linked (GlcNAc...) asparagine glycosylation is found at N227 and N245. Cystine bridges form between C255–C300 and C281–C327. N307 and N336 each carry an N-linked (GlcNAc...) asparagine glycan. The cysteines at positions 340 and 345 are disulfide-linked. The N-linked (GlcNAc...) asparagine glycan is linked to N373. C393 and C416 are disulfide-bonded. N-linked (GlcNAc...) asparagine glycosylation occurs at N460. The helical transmembrane segment at 482–502 (FLMVLFSLILLAVIIVGIVVF) threads the bilayer. Over 503–513 (HKPSYFWKDMV) the chain is Cytoplasmic.

It belongs to the GDA1/CD39 NTPase family. Homodimer; disulfide-linked. The cofactor is Ca(2+). It depends on Mg(2+) as a cofactor. Post-translationally, N-glycosylated. The N-terminus is blocked. In terms of processing, palmitoylated on Cys-13; which is required for caveola targeting.

The protein localises to the membrane. Its subcellular location is the caveola. The enzyme catalyses a ribonucleoside 5'-triphosphate + 2 H2O = a ribonucleoside 5'-phosphate + 2 phosphate + 2 H(+). It catalyses the reaction a ribonucleoside 5'-triphosphate + H2O = a ribonucleoside 5'-diphosphate + phosphate + H(+). The catalysed reaction is a ribonucleoside 5'-diphosphate + H2O = a ribonucleoside 5'-phosphate + phosphate + H(+). It carries out the reaction ATP + 2 H2O = AMP + 2 phosphate + 2 H(+). The enzyme catalyses ATP + H2O = ADP + phosphate + H(+). It catalyses the reaction ADP + H2O = AMP + phosphate + H(+). The catalysed reaction is CTP + 2 H2O = CMP + 2 phosphate + 2 H(+). It carries out the reaction CTP + H2O = CDP + phosphate + H(+). The enzyme catalyses CDP + H2O = CMP + phosphate + H(+). It catalyses the reaction GTP + 2 H2O = GMP + 2 phosphate + 2 H(+). The catalysed reaction is GTP + H2O = GDP + phosphate + H(+). It carries out the reaction GDP + H2O = GMP + phosphate + H(+). The enzyme catalyses ITP + 2 H2O = IMP + 2 phosphate + 2 H(+). It catalyses the reaction ITP + H2O = IDP + phosphate + H(+). The catalysed reaction is IDP + H2O = IMP + phosphate + H(+). It carries out the reaction UTP + 2 H2O = UMP + 2 phosphate + 2 H(+). The enzyme catalyses UTP + H2O = UDP + phosphate + H(+). It catalyses the reaction UDP + H2O = UMP + phosphate + H(+). Catalyzes the hydrolysis of both di- and triphosphate nucleotides (NDPs and NTPs) and hydrolyze NTPs to nucleotide monophosphates (NMPs) in two distinct successive phosphate-releasing steps, with NDPs as intermediates and participates in the regulation of extracellular levels of nucleotides. By hydrolyzing proinflammatory ATP and platelet-activating ADP to AMP, it blocks platelet aggregation and supports blood flow. The protein is Ectonucleoside triphosphate diphosphohydrolase 1 of Bos taurus (Bovine).